The chain runs to 1460 residues: Cilia- and flagella-associated protein 43 (1460 aa).

WD repeat units lie at residues 46–87 (EGRY…HLQC), 91–132 (VATV…RLVK), 184–221 (SKGH…MKNY), 303–342 (RRRS…AGHT), 428–468 (IFAC…DSAS), 529–569 (MRDH…MKLP), 589–628 (FGRG…IHYS), 911–951 (EIDP…VTEV), and 1129–1170 (NRRF…CRAV). Coiled coils occupy residues 1170–1214 (VVEA…AEEA) and 1399–1446 (LGEH…LREA).

The protein belongs to the CFAP43 family.

Its subcellular location is the cell projection. The protein localises to the cilium. It is found in the flagellum. The protein resides in the cytoplasm. It localises to the cytoskeleton. Its subcellular location is the flagellum axoneme. Flagellar protein involved in flagellum axoneme organization and function. This chain is Cilia- and flagella-associated protein 43, found in Trypanosoma brucei brucei (strain 927/4 GUTat10.1).